Consider the following 166-residue polypeptide: Small ribosomal subunit protein uS5 (166 aa).

In terms of domain architecture, S5 DRBM spans 11 to 74; the sequence is LQEKLIAVNR…EKARRNMINV (64 aa).

This sequence belongs to the universal ribosomal protein uS5 family. In terms of assembly, part of the 30S ribosomal subunit. Contacts proteins S4 and S8.

In terms of biological role, with S4 and S12 plays an important role in translational accuracy. Its function is as follows. Located at the back of the 30S subunit body where it stabilizes the conformation of the head with respect to the body. This chain is Small ribosomal subunit protein uS5, found in Actinobacillus pleuropneumoniae serotype 5b (strain L20).